The chain runs to 264 residues: Thymidylate synthase (264 aa).

Position 21 (Arg-21) interacts with dUMP. Residue His-51 participates in (6R)-5,10-methylene-5,6,7,8-tetrahydrofolate binding. 126-127 is a dUMP binding site; that stretch reads RR. Cys-146 acts as the Nucleophile in catalysis. DUMP-binding positions include 166-169, Asn-177, and 207-209; these read RSAD and HIY. Residue Asp-169 participates in (6R)-5,10-methylene-5,6,7,8-tetrahydrofolate binding. Ala-263 is a (6R)-5,10-methylene-5,6,7,8-tetrahydrofolate binding site.

Belongs to the thymidylate synthase family. Bacterial-type ThyA subfamily. Homodimer.

Its subcellular location is the cytoplasm. It carries out the reaction dUMP + (6R)-5,10-methylene-5,6,7,8-tetrahydrofolate = 7,8-dihydrofolate + dTMP. The protein operates within pyrimidine metabolism; dTTP biosynthesis. In terms of biological role, catalyzes the reductive methylation of 2'-deoxyuridine-5'-monophosphate (dUMP) to 2'-deoxythymidine-5'-monophosphate (dTMP) while utilizing 5,10-methylenetetrahydrofolate (mTHF) as the methyl donor and reductant in the reaction, yielding dihydrofolate (DHF) as a by-product. This enzymatic reaction provides an intracellular de novo source of dTMP, an essential precursor for DNA biosynthesis. This Agrobacterium fabrum (strain C58 / ATCC 33970) (Agrobacterium tumefaciens (strain C58)) protein is Thymidylate synthase.